The primary structure comprises 800 residues: Phosphoinositide 3-kinase adapter protein 1 (800 aa).

The TIR domain occupies glycine 8–serine 145. A necessary and sufficient to mediate inhibition of NF-kappa-B downstream of activated TLRs region spans residues tyrosine 10–aspartate 144. The 137-residue stretch at valine 185–phenylalanine 321 folds into the DBB domain. A Phosphotyrosine modification is found at tyrosine 266. Phosphotyrosine; by SYK is present on residues tyrosine 423, tyrosine 448, and tyrosine 463. The tract at residues glutamate 527–asparagine 548 is disordered. Residues glutamine 643–lysine 663 adopt a coiled-coil conformation. The segment covering proline 702–threonine 713 has biased composition (basic and acidic residues). The interval proline 702 to arginine 800 is disordered. A compositionally biased stretch (low complexity) spans glutamate 714–serine 737. Residues serine 749–proline 759 show a composition bias toward polar residues. Pro residues-rich tracts occupy residues leucine 767–proline 777 and tyrosine 791–arginine 800.

In terms of assembly, homooligomer. Interacts (phosphorylated on tyrosine residues within YXXM motifs) with PIK3R1 (via SH2 domain); required for BCR- and TLR-mediated activation of phosphoinositide 3-kinase. In terms of processing, constitutively phosphorylated. Phosphorylated on tyrosine residues within the YXXM motifs by BTK and SYK. Isoform 1 and isoform 2 are phosphorylated on tyrosine residues, most likely within the YXXM motifs, via CD19 activation.

It is found in the cytoplasm. The protein localises to the cell membrane. In terms of biological role, signaling adapter that contributes to B-cell development by linking B-cell receptor (BCR) signaling to the phosphoinositide 3-kinase (PI3K)-Akt signaling pathway. Has a complementary role to the BCR coreceptor CD19, coupling BCR and PI3K activation by providing a docking site for the PI3K subunit PIK3R1. Alternatively, links Toll-like receptor (TLR) signaling to PI3K activation, a process preventing excessive inflammatory cytokine production. Also involved in the activation of PI3K in natural killer cells. May be involved in the survival of mature B-cells via activation of REL. This Gallus gallus (Chicken) protein is Phosphoinositide 3-kinase adapter protein 1 (PIK3AP1).